The primary structure comprises 144 residues: Probable disulfide formation protein (144 aa).

Residues 10-29 (WNLLLLTWLVALISTLSALF) form a helical membrane-spanning segment. A disulfide bond links Cys-39 and Cys-42. A run of 2 helical transmembrane segments spans residues 44 to 63 (FQRA…CYRS) and 70 to 87 (YALP…VHTL). A disulfide bond links Cys-100 and Cys-107. Residues 116 to 138 (GVVPLPALALFAFIIIAILLIII) form a helical membrane-spanning segment.

It belongs to the DsbB family. BdbC subfamily.

It is found in the cell inner membrane. Its function is as follows. Required for disulfide bond formation in some proteins. The polypeptide is Probable disulfide formation protein (Metapseudomonas resinovorans (Pseudomonas resinovorans)).